We begin with the raw amino-acid sequence, 216 residues long: RNA pyrophosphohydrolase (216 aa).

The region spanning 6 to 149 (GFRPNVGIIL…KRDVYQLALT (144 aa)) is the Nudix hydrolase domain. The Nudix box signature appears at 38–59 (GGIKYGETPMQAMYRELHEETG).

This sequence belongs to the Nudix hydrolase family. RppH subfamily. It depends on a divalent metal cation as a cofactor.

Its function is as follows. Accelerates the degradation of transcripts by removing pyrophosphate from the 5'-end of triphosphorylated RNA, leading to a more labile monophosphorylated state that can stimulate subsequent ribonuclease cleavage. This Burkholderia ambifaria (strain MC40-6) protein is RNA pyrophosphohydrolase.